A 156-amino-acid chain; its full sequence is Ribosomal RNA large subunit methyltransferase H (156 aa).

S-adenosyl-L-methionine-binding positions include leucine 73, glycine 104, and 123–128; that span reads LSALTL.

The protein belongs to the RNA methyltransferase RlmH family. Homodimer.

The protein resides in the cytoplasm. The catalysed reaction is pseudouridine(1915) in 23S rRNA + S-adenosyl-L-methionine = N(3)-methylpseudouridine(1915) in 23S rRNA + S-adenosyl-L-homocysteine + H(+). Functionally, specifically methylates the pseudouridine at position 1915 (m3Psi1915) in 23S rRNA. The protein is Ribosomal RNA large subunit methyltransferase H of Vibrio parahaemolyticus serotype O3:K6 (strain RIMD 2210633).